The primary structure comprises 163 residues: Staphylokinase (163 aa).

The signal sequence occupies residues 1–27 (MLKRSLLFLTVLLLLFSFSSITNEVSA).

It belongs to the staphylokinase family.

The protein resides in the secreted. Functionally, potent plasminogen activator that converts plasminogen into plasmin. It forms a 1:1 complex with plasmin, which in turn activates other plasminogen molecules. The sequence is that of Staphylokinase (sak) from Staphylococcus aureus (strain MW2).